Consider the following 302-residue polypeptide: Alpha-N-acetyl-neuraminyl-2,3-beta-galactosyl-1,3-N-acetyl-galactosaminide alpha-2,6-sialyltransferase (302 aa).

Over 1–6 the chain is Cytoplasmic; sequence MKAPGR. A helical; Signal-anchor for type II membrane protein transmembrane segment spans residues 7 to 27; sequence LVLIILCSVVFSAVYILLCCW. At 28-302 the chain is on the lumenal side; that stretch reads AGLPLCLATC…VFAHPSWRTE (275 aa). A disulfide bridge connects residues C76 and C225. N135 carries an N-linked (GlcNAc...) asparagine glycan.

The protein belongs to the glycosyltransferase 29 family. As to expression, ubiquitous.

The protein localises to the golgi apparatus membrane. It catalyses the reaction an alpha-Neu5Ac-(2-&gt;3)-beta-D-Gal-(1-&gt;3)-D-GlcNAc derivative + CMP-N-acetyl-beta-neuraminate = an alpha-Neu5Ac-(2-&gt;3)-beta-D-Gal-(1-&gt;3)-[alpha-Neu5Ac-(2-&gt;6)]-D-GlcNAc derivative + CMP + H(+). The catalysed reaction is N-acetyl-alpha-neuraminosyl-(2-&gt;3)-beta-D-galactosyl-(1-&gt;3)-N-acetyl-D-galactosamine + CMP-N-acetyl-beta-neuraminate = N-acetyl-alpha-neuraminosyl-(2-&gt;3)-beta-D-galactosyl-(1-&gt;3)-[N-acetyl-alpha-neuraminosyl-(2-&gt;6)]-N-acetyl-D-galactosamine + CMP + H(+). It carries out the reaction a ganglioside GM1b (d18:1(4E)) + CMP-N-acetyl-beta-neuraminate = a ganglioside GD1alpha (d18:1(4E)) + CMP + H(+). The enzyme catalyses 3-O-[alpha-Neu5Ac-(2-&gt;3)-beta-D-Gal-(1-&gt;3)-alpha-D-GalNAc]-L-Ser-[protein] + CMP-N-acetyl-beta-neuraminate = a 3-O-{alpha-Neu5Ac-(2-&gt;3)-beta-D-Gal-(1-&gt;3)-[alpha-Neu5Ac-(2-&gt;6)]-alpha-D-GalNAc}-L-seryl-[protein] + CMP + H(+). It catalyses the reaction 3-O-[alpha-Neu5Ac-(2-&gt;3)-beta-D-Gal-(1-&gt;3)-alpha-D-GalNAc]-L-Thr-[protein] + CMP-N-acetyl-beta-neuraminate = a 3-O-{alpha-Neu5Ac-(2-&gt;3)-beta-D-Gal-(1-&gt;3)-[alpha-Neu5Ac-(2-&gt;6)]-alpha-D-GalNAc}-L-threonyl-[protein] + CMP + H(+). The protein operates within protein modification; protein glycosylation. Its pathway is glycolipid biosynthesis. Functionally, transfers the sialyl group (N-acetyl-alpha-neuraminyl or NeuAc) from CMP-NeuAc to the GalNAc residue on the NeuAc-alpha-2,3-Gal-beta-1,3-GalNAc sequence of glycoproteins and glycolipids forming an alpha-2,6-linkage. Produces branched type disialyl structures by transfer of a sialyl group onto a GalNAc residue inside the backbone core chains. Prefers O-glycans to glycoproteins or glycolipids. The polypeptide is Alpha-N-acetyl-neuraminyl-2,3-beta-galactosyl-1,3-N-acetyl-galactosaminide alpha-2,6-sialyltransferase (ST6GALNAC4) (Homo sapiens (Human)).